A 929-amino-acid polypeptide reads, in one-letter code: Isoleucine--tRNA ligase (929 aa).

The 'HIGH' region signature appears at 58–68 (PYANGDIHIGH). Glu-568 contributes to the L-isoleucyl-5'-AMP binding site. Positions 609–613 (KMSKS) match the 'KMSKS' region motif. Position 612 (Lys-612) interacts with ATP. The Zn(2+) site is built by Cys-892, Cys-895, Cys-912, and Cys-915.

This sequence belongs to the class-I aminoacyl-tRNA synthetase family. IleS type 1 subfamily. In terms of assembly, monomer. Zn(2+) serves as cofactor.

The protein resides in the cytoplasm. It catalyses the reaction tRNA(Ile) + L-isoleucine + ATP = L-isoleucyl-tRNA(Ile) + AMP + diphosphate. Functionally, catalyzes the attachment of isoleucine to tRNA(Ile). As IleRS can inadvertently accommodate and process structurally similar amino acids such as valine, to avoid such errors it has two additional distinct tRNA(Ile)-dependent editing activities. One activity is designated as 'pretransfer' editing and involves the hydrolysis of activated Val-AMP. The other activity is designated 'posttransfer' editing and involves deacylation of mischarged Val-tRNA(Ile). The chain is Isoleucine--tRNA ligase from Thiobacillus denitrificans (strain ATCC 25259 / T1).